Consider the following 1170-residue polypeptide: Thrombospondin-1 (1170 aa).

The first 18 residues, 1–18 (MGLAWGLGVLLLLHACGS), serve as a signal peptide directing secretion. Residues 47–95 (RLVKGPDPSSPAFRIEDANLIPPVPDKKFQDLVDAVRAEKGFLLLASLR) are heparin-binding. The 206-residue stretch at 65 to 270 (NLIPPVPDKK…HKTKDLQAIC (206 aa)) folds into the Laminin G-like domain. A disulfide bond links Cys-171 and Cys-232. Residues Asn-248 and Asn-360 are each glycosylated (N-linked (GlcNAc...) asparagine). Positions 316-373 (PLCYHNGVQYRTGDEWTVDSCTECRCQNSVTICKKVSCPIMPCSNATVPDGECCPRCW) constitute a VWFC domain. 3 consecutive TSP type-1 domains span residues 379–429 (DDGW…QECD), 435–490 (DGGW…DSCP), and 492–547 (NGGW…QDCP). 27 disulfide bridges follow: Cys-391–Cys-423, Cys-395–Cys-428, Cys-406–Cys-413, Cys-447–Cys-484, Cys-451–Cys-489, Cys-462–Cys-474, Cys-504–Cys-541, Cys-508–Cys-546, Cys-519–Cys-531, Cys-551–Cys-562, Cys-556–Cys-572, Cys-575–Cys-586, Cys-592–Cys-608, Cys-599–Cys-617, Cys-620–Cys-644, Cys-650–Cys-663, Cys-657–Cys-676, Cys-678–Cys-689, Cys-705–Cys-713, Cys-718–Cys-738, Cys-754–Cys-774, Cys-777–Cys-797, Cys-813–Cys-833, Cys-836–Cys-856, Cys-874–Cys-894, Cys-910–Cys-930, and Cys-946–Cys-1167. One can recognise an EGF-like 1 domain in the interval 547-587 (PIDGCLSNPCFAGVQCTSYPDGSWKCGACPPGYSGDGVECK). Residue Ser-553 is glycosylated (O-linked (Xyl) serine). The EGF-like 2 domain maps to 646-690 (PRNPCTDGTHDCNKNAKCNYLGHYSDPMYRCECKPGYAGNGIICG). TSP type-3 repeat units follow at residues 691-726 (EDTD…NSGQ), 727-762 (EDYD…NPAQ), 763-785 (YDYD…NPDQ), 786-821 (ADTD…NVDQ), 822-844 (KDTD…NPDQ), 845-882 (LDSD…NANQ), 883-918 (ADHD…NPDQ), and 919-954 (KDSD…DISE). Asn-708 carries N-linked (GlcNAc...) asparagine glycosylation. Residues 839–944 (EHNPDQLDSD…DQDKVPDIDD (106 aa)) are disordered. 3 stretches are compositionally biased toward basic and acidic residues: residues 840–854 (HNPD…RIGD), 883–894 (ADHDKDGKGDAC), and 917–941 (DQKD…KVPD). The Cell attachment site signature appears at 926 to 928 (RGD). In terms of domain architecture, TSP C-terminal spans 958-1170 (RRFQMIPLDP…SDLKYECRDS (213 aa)). N-linked (GlcNAc...) asparagine glycans are attached at residues Asn-1067 and Asn-1085.

This sequence belongs to the thrombospondin family. As to quaternary structure, homotrimer; disulfide-linked. Can bind to fibrinogen, fibronectin, laminin, type V collagen and integrins alpha-V/beta-1, alpha-V/beta-3 and alpha-IIb/beta-3. Binds heparin. Interacts (via the C-terminal domain) with CD47. Interacts (via the TSP type I repeats) with CD36; the interaction conveys an antiangiogenic effect. Interacts (via the TSP type I repeats) with HRG; the interaction blocks the antiangiogenic effect of THBS1 with CD36. Interacts with ATF6 (via lumenal domain). Interacts with FN1; this interaction is enhanced by TNFAIP6, which may act as a bridging molecule between FN1 and THBS1. Interacts with SIRPA; the interaction stimulates phosphorylation of SIRPA. In terms of tissue distribution, odontoblasts.

It localises to the secreted. It is found in the cell surface. Its subcellular location is the extracellular space. The protein resides in the extracellular matrix. The protein localises to the endoplasmic reticulum. It localises to the sarcoplasmic reticulum. In terms of biological role, adhesive glycoprotein that mediates cell-to-cell and cell-to-matrix interactions. Multifunctional, involved in inflammation, angiogenesis, wound healing, reactive oxygen species (ROS) signaling, nitrous oxide (NO) signaling, apoptosis, senescence, aging, cellular self-renewal, stemness, and cardiovascular and metabolic homeostasis. Negatively modulates dendritic cell activation and cytokine release, as part of an autocrine feedback loop, contributing to the resolution of inflammation and immune homeostasis. Ligand for receptor CD47. Modulates nitrous oxide (NO) signaling via CD47, hence playing a role as a pressor agent, supporting blood pressure. Plays a role in endothelial cell senescence, acting via CD47, by increasing the abundance and activation of NADPH oxidase NOX1, and so generating excess ROS. Inhibits stem cell self-renewal, acting via CD47 signaling, probably by regulation of the stem cell transcription factors POU5F1/OCT4, SOX2, MYC/c-Myc and KLF4. Negatively modulates wound healing, acting via CD47. Ligand for receptor CD36. Involved in inducing apoptosis in podocytes in response to elevated free fatty acids, acting via CD36. Plays a role in suppressing angiogenesis, acting, depending on context, via CD36 or CD47. Promotes cellular senescence in a TP53-CDKN1A-RB1 signaling-dependent manner. Ligand for immunoglobulin-like cell surface receptor SIRPA. Involved in ROS signaling in non-phagocytic cells, stimulating NADPH oxidase-derived ROS production, acting via interaction with SIRPA. Plays a role in metabolic dysfunction in diet-induced obesity, perhaps acting by exacerbating adipose inflammatory activity; its effects may be mediated, at least in part, through enhanced adipocyte proliferation. Plays a role in ER stress response, via its interaction with the activating transcription factor 6 alpha (ATF6) which produces adaptive ER stress response factors. May be involved in age-related conditions, including metabolic dysregulation, during normal aging. The protein is Thrombospondin-1 (THBS1) of Bos taurus (Bovine).